The sequence spans 536 residues: GPI alpha-1,2-mannosyltransferase 3 (536 aa).

A glycan (N-linked (GlcNAc...) asparagine) is linked at asparagine 15. 2 consecutive transmembrane segments (helical) span residues 40–60 (IFGINITVFIVLVRLLNCVLV) and 118–138 (VYLLVFVPRVFQALLAAYADV). N-linked (GlcNAc...) asparagine glycosylation is present at asparagine 176. Transmembrane regions (helical) follow at residues 206–226 (LVSLAVVIRPTALIVWFPLIF), 243–263 (YFPIGVLALGVSTLIDSFFYG), 297–317 (GLPVVIGPHLPLVLHGCLLST), 322–342 (ILLLTIIWTTAVYSLLAHKEF), 344–364 (FIYPVLPFCMIFCGLSLAKLQ), and 369–389 (AAAGALLLFNLCPALYTGLVH). N-linked (GlcNAc...) asparagine glycosylation occurs at asparagine 467.

Belongs to the glycosyltransferase 22 family. PIGB subfamily.

The protein localises to the endoplasmic reticulum membrane. It participates in glycolipid biosynthesis; glycosylphosphatidylinositol-anchor biosynthesis. Functionally, alpha-1,2-mannosyltransferase that catalyzes the transfer of the third mannose, via an alpha-1,2 bond, from a dolichol-phosphate-mannose (Dol-P-Man) to an alpha-D-Man-(1-&gt;6)-2-PEtn-alpha-D-Man-(1-&gt;4)-alpha-D-GlcN-(1-&gt;6)-(1-radyl,2-acyl-sn-glycero-3-phospho)-2-acyl-inositol intermediate to generate an alpha-D-Man-(1-&gt;2)-alpha-D-Man-(1-&gt;6)-2-PEtn-alpha-D-Man-(1-&gt;4)-alpha-D-GlcN-(1-&gt;6)-(1-radyl,2-acyl-sn-glycero-3-phospho)-2-acyl-inositol (also termed H6) and participates in the nineth step of the glycosylphosphatidylinositol-anchor biosynthesis. May also add the third mannose to an alpha-D-Man-(1-&gt;6)-alpha-D-Man-(1-&gt;4)-alpha-D-GlcN-(1-&gt;6)-(1-radyl,2-acyl-sn-glycero-3-phospho)-2-acyl-inositol (also termed H3) intermediate generating an alpha-D-Man-(1-&gt;2)-alpha-D-Man-(1-&gt;6)-alpha-D-Man-(1-&gt;4)-alpha-D-GlcN-(1-&gt;6)-(1-radyl,2-acyl-sn-glycero-3-phospho)-2-acyl-inositol (also termed H4). The protein is GPI alpha-1,2-mannosyltransferase 3 of Danio rerio (Zebrafish).